The following is a 92-amino-acid chain: Large ribosomal subunit protein bL25 (92 aa).

The protein belongs to the bacterial ribosomal protein bL25 family. Part of the 50S ribosomal subunit; part of the 5S rRNA/L5/L18/L25 subcomplex. Contacts the 5S rRNA. Binds to the 5S rRNA independently of L5 and L18.

In terms of biological role, this is one of the proteins that binds to the 5S RNA in the ribosome where it forms part of the central protuberance. In Vibrio campbellii (strain ATCC BAA-1116), this protein is Large ribosomal subunit protein bL25.